Here is a 605-residue protein sequence, read N- to C-terminus: Protein MLN51 homolog (605 aa).

Composition is skewed to acidic residues over residues 1-16 and 30-40; these read MAPD…SDPD and SDDDEDDEEAD. 5 disordered regions span residues 1–88, 101–132, 151–275, 350–380, and 544–605; these read MAPD…DGDY, NNDK…KEPF, DAAS…GRPP, TAQT…KVSS, and YQAD…SFSK. Serine 30 carries the post-translational modification Phosphoserine. Residues 41 to 57 show a composition bias toward basic and acidic residues; that stretch reads DHDKLRAAIQIHSDEHS. Over residues 75–87 the composition is skewed to acidic residues; the sequence is SYGDDDDEEEDGD. Residues 166–192 show a composition bias toward basic and acidic residues; sequence QSRDERKWGHDKFEEMNTQKQQYDRRT. Polar residues-rich tracts occupy residues 214–228, 247–265, and 367–380; these read NNSK…QNQF, NGNQ…SSVE, and LYQQ…KVSS. Low complexity predominate over residues 552–567; it reads PSSAGSSSQENSSNNP. Over residues 578–593 the composition is skewed to polar residues; sequence VTNNGNSQRSNSNPNK.

The protein belongs to the CASC3 family. As to quaternary structure, weakly interacts with EIF4A3.

Its subcellular location is the nucleus. It is found in the cytoplasm. In terms of biological role, core component of the splicing-dependent multiprotein exon junction complex (EJC) deposited at splice junctions on mRNAs. The EJC is a dynamic structure consisting of core proteins and several peripheral nuclear and cytoplasmic associated factors that join the complex only transiently either during EJC assembly or during subsequent mRNA metabolism. The EJC marks the position of the exon-exon junction in the mature mRNA for the gene expression machinery and the core components remain bound to spliced mRNAs throughout all stages of mRNA metabolism thereby influencing downstream processes including nuclear mRNA export, subcellular mRNA localization, translation efficiency and nonsense-mediated mRNA decay (NMD). Stimulates the ATPase and RNA-helicase activities of EIF4A3. In Arabidopsis thaliana (Mouse-ear cress), this protein is Protein MLN51 homolog.